A 1259-amino-acid polypeptide reads, in one-letter code: Neural cell adhesion molecule L1 (1259 aa).

A signal peptide spans 1 to 19 (MVMMLWYVLPLLLCSPCLL). Over 20-1122 (IQIPDEYKGH…VSTTGSFASE (1103 aa)) the chain is Extracellular. Ig-like C2-type domains follow at residues 35–128 (PVIT…HEIQ), 138–225 (PKET…EPID), 239–327 (PRLL…YYVT), 332–419 (PYWL…AYIY), 424–506 (PARI…NNVT), and 517–600 (TQIT…DEVE). 2 disulfides stabilise this stretch: cysteine 57–cysteine 113 and cysteine 157–cysteine 208. Asparagine 100, asparagine 202, asparagine 246, and asparagine 293 each carry an N-linked (GlcNAc...) asparagine glycan. 2 disulfide bridges follow: cysteine 263-cysteine 311 and cysteine 353-cysteine 403. Residues asparagine 432, asparagine 489, and asparagine 504 are each glycosylated (N-linked (GlcNAc...) asparagine). A disulfide bond links cysteine 447 and cysteine 496. Cysteine 538 and cysteine 590 are oxidised to a cystine. Short sequence motifs (cell attachment site) lie at residues 553–555 (RGD) and 562–564 (RGD). 5 consecutive Fibronectin type-III domains span residues 613-711 (PVPH…TPEA), 716-809 (NPVD…SGED), 811-916 (PQVS…PEGV), 919-1014 (HPEA…MALF), and 1016-1116 (KPDF…VSTT). Asparagine 670 is a glycosylation site (N-linked (GlcNAc...) asparagine). Positions 697-724 (GEPSPVSETVVTPEAAPEKNPVDVRGEG) are disordered. The segment covering 712–724 (APEKNPVDVRGEG) has biased composition (basic and acidic residues). N-linked (GlcNAc...) asparagine glycans are attached at residues asparagine 725, asparagine 776, asparagine 824, asparagine 848, asparagine 875, asparagine 968, asparagine 978, asparagine 1021, asparagine 1029, asparagine 1072, and asparagine 1106. The helical transmembrane segment at 1123-1145 (GWFIAFVSAIILLLLILLILCFI) threads the bilayer. Topologically, residues 1146–1259 (KRSKGGKYSV…SPINPAVALE (114 aa)) are cytoplasmic. A phosphoserine mark is found at serine 1165, arginine 1179, serine 1180, serine 1183, serine 1196, serine 1245, serine 1246, and serine 1250. 2 disordered regions span residues 1182 to 1209 (ESDN…SDDS) and 1228 to 1259 (IGQY…VALE). A compositionally biased stretch (polar residues) spans 1243 to 1252 (NDSSGATSPI).

Belongs to the immunoglobulin superfamily. L1/neurofascin/NgCAM family. As to quaternary structure, interacts with SHTN1; the interaction occurs in axonal growth cones. Interacts with isoform 2 of BSG. As to expression, isoform 2 is predominantly found in the brain, while isoform 1 is found in the peripheral nervous system.

It is found in the cell membrane. The protein resides in the cell projection. Its subcellular location is the growth cone. Neural cell adhesion molecule involved in the dynamics of cell adhesion and in the generation of transmembrane signals at tyrosine kinase receptors. During brain development, critical in multiple processes, including neuronal migration, axonal growth and fasciculation, and synaptogenesis. In the mature brain, plays a role in the dynamics of neuronal structure and function, including synaptic plasticity. The polypeptide is Neural cell adhesion molecule L1 (L1cam) (Rattus norvegicus (Rat)).